Here is a 332-residue protein sequence, read N- to C-terminus: Geranylgeranyl pyrophosphate synthase 2 (332 aa).

Lys55, Arg58, and His87 together coordinate isopentenyl diphosphate. Residues Asp94 and Asp98 each coordinate Mg(2+). Arg103 lines the dimethylallyl diphosphate pocket. Arg104 contacts isopentenyl diphosphate. 3 residues coordinate dimethylallyl diphosphate: Lys181, Thr182, and Gln218. Asp221 lines the Mg(2+) pocket. Dimethylallyl diphosphate-binding residues include Asn225, Lys235, and Lys245.

This sequence belongs to the FPP/GGPP synthase family. Mg(2+) serves as cofactor.

It carries out the reaction isopentenyl diphosphate + dimethylallyl diphosphate = (2E)-geranyl diphosphate + diphosphate. The enzyme catalyses isopentenyl diphosphate + (2E)-geranyl diphosphate = (2E,6E)-farnesyl diphosphate + diphosphate. The catalysed reaction is isopentenyl diphosphate + (2E,6E)-farnesyl diphosphate = (2E,6E,10E)-geranylgeranyl diphosphate + diphosphate. Geranylgeranyl pyrophosphate synthase; part of the gene cluster 3 that mediates the biosynthesis of an isoprenoid secondary metabolite. This is Geranylgeranyl pyrophosphate synthase 2 (GGS2) from Zymoseptoria tritici (strain CBS 115943 / IPO323) (Speckled leaf blotch fungus).